The chain runs to 118 residues: Small ribosomal subunit protein uS13 (118 aa).

The interval 92-118 is disordered; it reads RRGLPVRGQRTKTNARTRKGPRKPIKK.

Belongs to the universal ribosomal protein uS13 family. In terms of assembly, part of the 30S ribosomal subunit. Forms a loose heterodimer with protein S19. Forms two bridges to the 50S subunit in the 70S ribosome.

Its function is as follows. Located at the top of the head of the 30S subunit, it contacts several helices of the 16S rRNA. In the 70S ribosome it contacts the 23S rRNA (bridge B1a) and protein L5 of the 50S subunit (bridge B1b), connecting the 2 subunits; these bridges are implicated in subunit movement. Contacts the tRNAs in the A and P-sites. This chain is Small ribosomal subunit protein uS13, found in Pectobacterium carotovorum subsp. carotovorum (strain PC1).